The chain runs to 229 residues: 2,3-bisphosphoglycerate-dependent phosphoglycerate mutase (229 aa).

Residues 7-14 (RHGQSEWN), 20-21 (TG), Arg59, 86-89 (ERHY), Lys97, 113-114 (RR), and 182-183 (GN) contribute to the substrate site. Catalysis depends on His8, which acts as the Tele-phosphohistidine intermediate. Glu86 (proton donor/acceptor) is an active-site residue.

Belongs to the phosphoglycerate mutase family. BPG-dependent PGAM subfamily.

It catalyses the reaction (2R)-2-phosphoglycerate = (2R)-3-phosphoglycerate. It participates in carbohydrate degradation; glycolysis; pyruvate from D-glyceraldehyde 3-phosphate: step 3/5. Catalyzes the interconversion of 2-phosphoglycerate and 3-phosphoglycerate. The chain is 2,3-bisphosphoglycerate-dependent phosphoglycerate mutase from Listeria monocytogenes serotype 4a (strain HCC23).